Reading from the N-terminus, the 167-residue chain is Lipoprotein signal peptidase (167 aa).

The next 3 membrane-spanning stretches (helical) occupy residues 10 to 30 (LIWL…KAWV), 68 to 88 (WQMW…TFWL), and 98 to 118 (SALP…DRFL). Active-site residues include Asp-124 and Asp-142. Residues 138–158 (FNLADSAIVAGAIGIGLLSLF) form a helical membrane-spanning segment.

It belongs to the peptidase A8 family.

Its subcellular location is the cell inner membrane. It carries out the reaction Release of signal peptides from bacterial membrane prolipoproteins. Hydrolyzes -Xaa-Yaa-Zaa-|-(S,diacylglyceryl)Cys-, in which Xaa is hydrophobic (preferably Leu), and Yaa (Ala or Ser) and Zaa (Gly or Ala) have small, neutral side chains.. It functions in the pathway protein modification; lipoprotein biosynthesis (signal peptide cleavage). Its function is as follows. This protein specifically catalyzes the removal of signal peptides from prolipoproteins. The protein is Lipoprotein signal peptidase of Xylella fastidiosa (strain 9a5c).